A 188-amino-acid chain; its full sequence is Peptidyl-tRNA hydrolase (188 aa).

Phenylalanine 15 is a binding site for tRNA. Catalysis depends on histidine 20, which acts as the Proton acceptor. TRNA is bound by residues tyrosine 64, asparagine 66, and asparagine 112.

Belongs to the PTH family. Monomer.

It is found in the cytoplasm. The enzyme catalyses an N-acyl-L-alpha-aminoacyl-tRNA + H2O = an N-acyl-L-amino acid + a tRNA + H(+). Its function is as follows. Hydrolyzes ribosome-free peptidyl-tRNAs (with 1 or more amino acids incorporated), which drop off the ribosome during protein synthesis, or as a result of ribosome stalling. In terms of biological role, catalyzes the release of premature peptidyl moieties from peptidyl-tRNA molecules trapped in stalled 50S ribosomal subunits, and thus maintains levels of free tRNAs and 50S ribosomes. This Borrelia recurrentis (strain A1) protein is Peptidyl-tRNA hydrolase.